Reading from the N-terminus, the 150-residue chain is UPF0756 membrane protein PMI1560 (150 aa).

Transmembrane regions (helical) follow at residues 16–36 (GLGI…LLVI), 51–71 (YGMT…IATG), 82–102 (FLNW…WLGA), and 123–143 (VIGV…AGIL).

The protein belongs to the UPF0756 family.

It localises to the cell membrane. The protein is UPF0756 membrane protein PMI1560 of Proteus mirabilis (strain HI4320).